We begin with the raw amino-acid sequence, 356 residues long: Syntaxin-7A (356 aa).

The Cytoplasmic portion of the chain corresponds to 1–333 (MYNNNNNFGG…NQKSSRNKMC (333 aa)). 2 stretches are compositionally biased toward low complexity: residues 32-74 (NNNN…FDNN) and 207-224 (NNNS…NNQQ). Disordered stretches follow at residues 32–88 (NNNN…NSDY) and 187–247 (EKTT…RRQQ). Basic and acidic residues predominate over residues 233-244 (EDEHQSLMESSR). Positions 259–321 (NSIIQERDEG…KEGVNHLREA (63 aa)) constitute a t-SNARE coiled-coil homology domain. A helical; Anchor for type IV membrane protein transmembrane segment spans residues 334–354 (WIVLILLIVCAVLGVILFFTL). Over 355-356 (RK) the chain is Vesicular.

The protein belongs to the syntaxin family. In terms of assembly, component of the SNARE complex composed of syn7A, syn8A, vamp7A and vti1A. Interacts with nsfA, snpA and snpC.

It is found in the endosome membrane. Functionally, involved in the targeting and/or fusion of transport vesicles to their target membrane during transport of proteins from the early endosome to the lysosome. Required for fusion of late endosomes with lysosomes and homotypic lysosomal fusion. May be involved in protein trafficking from the plasma membrane to the early endosome (EE) as well as in homotypic fusion of endocytic organelles. This Dictyostelium discoideum (Social amoeba) protein is Syntaxin-7A.